Consider the following 100-residue polypeptide: Urease subunit gamma (100 aa).

It belongs to the urease gamma subunit family. As to quaternary structure, heterotrimer of UreA (gamma), UreB (beta) and UreC (alpha) subunits. Three heterotrimers associate to form the active enzyme.

The protein resides in the cytoplasm. The catalysed reaction is urea + 2 H2O + H(+) = hydrogencarbonate + 2 NH4(+). It functions in the pathway nitrogen metabolism; urea degradation; CO(2) and NH(3) from urea (urease route): step 1/1. This chain is Urease subunit gamma, found in Streptomyces coelicolor (strain ATCC BAA-471 / A3(2) / M145).